Reading from the N-terminus, the 212-residue chain is Adenylate kinase (212 aa).

G10–T15 lines the ATP pocket. Residues S30 to V59 form an NMP region. AMP contacts are provided by residues T31, R36, R57 to V59, and Q90. The tract at residues G124–D161 is LID. ATP is bound at residue R125. Positions 128 and 131 each coordinate Zn(2+). S134 to Y135 is an ATP binding site. Zn(2+) contacts are provided by C148 and D151. Residues R158 and R169 each contribute to the AMP site. Residue N198 coordinates ATP.

This sequence belongs to the adenylate kinase family. Monomer.

The protein localises to the cytoplasm. The catalysed reaction is AMP + ATP = 2 ADP. It functions in the pathway purine metabolism; AMP biosynthesis via salvage pathway; AMP from ADP: step 1/1. Catalyzes the reversible transfer of the terminal phosphate group between ATP and AMP. Plays an important role in cellular energy homeostasis and in adenine nucleotide metabolism. The sequence is that of Adenylate kinase from Mesoplasma florum (strain ATCC 33453 / NBRC 100688 / NCTC 11704 / L1) (Acholeplasma florum).